The following is a 295-amino-acid chain: Mediator of RNA polymerase II transcription subunit 27 (295 aa).

It belongs to the Mediator complex subunit 27 family. Component of the Mediator complex.

It is found in the nucleus. Functionally, component of the Mediator complex, a coactivator involved in the regulated transcription of nearly all RNA polymerase II-dependent genes. Mediator functions as a bridge to convey information from gene-specific regulatory proteins to the basal RNA polymerase II transcription machinery. Mediator is recruited to promoters by direct interactions with regulatory proteins and serves as a scaffold for the assembly of a functional preinitiation complex with RNA polymerase II and the general transcription factors. The sequence is that of Mediator of RNA polymerase II transcription subunit 27 (MED27) from Anopheles gambiae (African malaria mosquito).